The following is a 1137-amino-acid chain: MQIFTILLLFNIFPSIFVQNLPDTTVAPRTKRTIKIGIAAAQRIQTSSIGWSVCGGAVPLAIERLKEMGFVKDFDFEYIVDYTECDLGSVVRAGMEFIKTHKVDVIIGPPCAQALRLMSFLAENYKKPVLGWGFVSDTDLSDVIRFPHLTTVIPNSLMLGYAASKMLTTFHWNRVALLYYFSDVKYCSGVMNDIEATFNDPSTPNVNIVIKAEIYLNDNETTDNVFQTVKSRARIILWCTQTSVEKRDYLIKIATHDMIGDEYVHIMLSMRNVAFGTQTSLGKPTFSQSGLTPIWESFTEGTDGFEKMAKQAATRMFVLDVNSEVADKKYLEYMQKNIIKAVQSPPMNCSTVECMTANTTIMGGYARHLFDVVYLYGIALTHTNSTDPAVYGDVDVLVHQFVTSFQGMTGHVVISPNLTRMPIFQLYGLNSDYDQVALVDFTYTNSVMVPNVTLFYKDEGGAVWSYYGHSRPLDIPICGFLGKSCPVSFWEQYKILIFVAIAVIVLMVLIMIIGCLCVISGKRAERARINAEWQVPFAKLIESEKQVRGKGASRRSLQSAPSISTGHSGVTTVSDFCENYTMMMYEKEMVLTAKYQYTHLTKADKERFVKMRKLDHENINRFIGLSIDSAHFISVTKLCSRGSLQDILSRGNFSMDYFFMFCIIRDVAKGLEYLHKTFLRLHGNLRSATCLVNDSWQVKLAEYGMDNLVEEQTPPKKRLLWVAPEVLRGSLSVSQMEPSADIYSFAIIASEILTKKEAWDILDRKEDCEEIVYNVKKGGLFPIRPEIITDIHDVNPALIALVKDCWAEVPEDRPTAENICSQMKGLVSKQKTNLMDHVFNMLEEYTSTLEEEIEERTKELTLEKKKADILLSRMLPKQVAERLKAGQTVEPEGFDSVTVFFSDVVKFTILASKCSPFQTVNLLNDLYSNFDTIIEQHGVYKVESIGDGYLCVSGLPTRNGYAHIKQIVDMSLKFMEYCKSFNIPHLPRENVELRIGVNSGPCVAGVVGLSMPRYCLFGDTVNTASRMESNGKPSLIHLTNDAHSLLTTHYPNQYETSSRGEVIIKGKGVMETFWVHGRFGEMEPTELRSISNRSTPPVTNDRWIPNPSSSHGSRPSSVYDPLQGHQKFKMDTLKVAN.

Residues 1 to 18 (MQIFTILLLFNIFPSIFV) form the signal peptide. The Extracellular portion of the chain corresponds to 19 to 494 (QNLPDTTVAP…CPVSFWEQYK (476 aa)). Residues Asn219, Asn348, Asn358, Asn384, Asn417, and Asn451 are each glycosylated (N-linked (GlcNAc...) asparagine). Residues 495-515 (ILIFVAIAVIVLMVLIMIIGC) form a helical membrane-spanning segment. At 516–1137 (LCVISGKRAE…FKMDTLKVAN (622 aa)) the chain is on the cytoplasmic side. The Protein kinase domain occupies 557-826 (LQSAPSISTG…ENICSQMKGL (270 aa)). Positions 840–871 (NMLEEYTSTLEEEIEERTKELTLEKKKADILL) form a coiled coil. Residues 898–1028 (TVFFSDVVKF…DTVNTASRME (131 aa)) form the Guanylate cyclase domain. A disordered region spans residues 1086–1122 (ELRSISNRSTPPVTNDRWIPNPSSSHGSRPSSVYDPL). Residues 1088–1098 (RSISNRSTPPV) are compositionally biased toward polar residues. Residues 1105–1117 (PNPSSSHGSRPSS) are compositionally biased toward low complexity.

It belongs to the adenylyl cyclase class-4/guanylyl cyclase family. In terms of tissue distribution, expressed predominantly in sensory neurons. Expressed asymmetrically in the right ASE (ASER) neuron and bilaterally in ASI and URX neurons. Expressed in PVT and bilaterally in AIY non-sensory neurons. Expressed in intestine.

The protein resides in the membrane. The catalysed reaction is GTP = 3',5'-cyclic GMP + diphosphate. Guanylate cyclase involved in the production of the second messenger cGMP. Involved in the sensing of K+ gradient by the ASE right (ASER) sensory neuron. The protein is Receptor-type guanylate cyclase gcy-1 (gcy-1) of Caenorhabditis elegans.